Reading from the N-terminus, the 242-residue chain is ATP-dependent dethiobiotin synthetase BioD (242 aa).

12–17 (SVGKTI) serves as a coordination point for ATP. Thr-16 is a binding site for Mg(2+). Lys-37 is a catalytic residue. Residue Asp-66 participates in ATP binding. The Mg(2+) site is built by Asp-66 and Glu-124. 184-185 (NR) provides a ligand contact to ATP.

This sequence belongs to the dethiobiotin synthetase family. In terms of assembly, homodimer. Mg(2+) serves as cofactor.

It localises to the cytoplasm. It catalyses the reaction (7R,8S)-7,8-diammoniononanoate + CO2 + ATP = (4R,5S)-dethiobiotin + ADP + phosphate + 3 H(+). It functions in the pathway cofactor biosynthesis; biotin biosynthesis; biotin from 7,8-diaminononanoate: step 1/2. Functionally, catalyzes a mechanistically unusual reaction, the ATP-dependent insertion of CO2 between the N7 and N8 nitrogen atoms of 7,8-diaminopelargonic acid (DAPA, also called 7,8-diammoniononanoate) to form a ureido ring. In Mannheimia succiniciproducens (strain KCTC 0769BP / MBEL55E), this protein is ATP-dependent dethiobiotin synthetase BioD.